We begin with the raw amino-acid sequence, 276 residues long: NH(3)-dependent NAD(+) synthetase (276 aa).

43 to 50 (GISGGVDS) is an ATP binding site. Asp49 is a binding site for Mg(2+). Residue Arg146 coordinates deamido-NAD(+). Position 166 (Thr166) interacts with ATP. Glu171 is a binding site for Mg(2+). Lys179 and Asp186 together coordinate deamido-NAD(+). ATP contacts are provided by Lys195 and Thr217. 266 to 267 (HK) provides a ligand contact to deamido-NAD(+).

This sequence belongs to the NAD synthetase family. As to quaternary structure, homodimer.

The enzyme catalyses deamido-NAD(+) + NH4(+) + ATP = AMP + diphosphate + NAD(+) + H(+). Its pathway is cofactor biosynthesis; NAD(+) biosynthesis; NAD(+) from deamido-NAD(+) (ammonia route): step 1/1. Functionally, catalyzes the ATP-dependent amidation of deamido-NAD to form NAD. Uses ammonia as a nitrogen source. This Shewanella baltica (strain OS223) protein is NH(3)-dependent NAD(+) synthetase.